We begin with the raw amino-acid sequence, 201 residues long: Homeobox protein ceh-28 (201 aa).

Positions 72–84 (SYYSSPSQNQRSY) are enriched in polar residues. Residues 72–94 (SYYSSPSQNQRSYQNHRQHSNPD) form a disordered region. A DNA-binding region (homeobox) is located at residues 104–163 (KRKPRVLFTQHQVNELEERFKKQRYVTATEREELAQCLGLTATQVKIWFQNRRYKCKRLA).

It belongs to the NK-2 homeobox family.

It localises to the nucleus. Probable transcription factor that regulates neuronal differention, including synapse assembly of the cholinergic motor neuron M4. Activates expression of growth factor, neuropeptide and transcription factor genes, such as TGF-beta dbl-1, FMRFamide-like flp-5 and transcription repressor zag-1, in the M4 neuron. Required for pharynx peristalsis. In Caenorhabditis elegans, this protein is Homeobox protein ceh-28.